Reading from the N-terminus, the 417-residue chain is Tyrosine--tRNA ligase (417 aa).

Tyr-39 contributes to the L-tyrosine binding site. The 'HIGH' region signature appears at 44–53; that stretch reads PTASSLHAGS. 2 residues coordinate L-tyrosine: Tyr-176 and Gln-180. Positions 236-240 match the 'KMSKS' region motif; that stretch reads KMGKS. Position 239 (Lys-239) interacts with ATP. Residues 350 to 417 form the S4 RNA-binding domain; the sequence is TGLLILLVQA…KKKHVLIKPL (68 aa).

It belongs to the class-I aminoacyl-tRNA synthetase family. TyrS type 1 subfamily. Homodimer.

Its subcellular location is the cytoplasm. It carries out the reaction tRNA(Tyr) + L-tyrosine + ATP = L-tyrosyl-tRNA(Tyr) + AMP + diphosphate + H(+). Catalyzes the attachment of tyrosine to tRNA(Tyr) in a two-step reaction: tyrosine is first activated by ATP to form Tyr-AMP and then transferred to the acceptor end of tRNA(Tyr). The protein is Tyrosine--tRNA ligase of Bartonella henselae (strain ATCC 49882 / DSM 28221 / CCUG 30454 / Houston 1) (Rochalimaea henselae).